The following is an 88-amino-acid chain: Protein transport protein Sec61 subunit beta (88 aa).

The tract at residues 1–41 is disordered; it reads MDSSVPGGQRTLQKRRNAQLQKEKKANQTPASPRQAGFGGS. Residues 1-60 lie on the Cytoplasmic side of the membrane; that stretch reads MDSSVPGGQRTLQKRRNAQLQKEKKANQTPASPRQAGFGGSSSSILKLYTDEANGLRVDP. Residues 61–81 traverse the membrane as a helical segment; that stretch reads LVVLFLAVAFVFSVVALHVVA.

It belongs to the SEC61-beta family. Heterotrimeric complex composed of SEC61, SEB1 and SSS1.

The protein resides in the endoplasmic reticulum membrane. In terms of biological role, necessary for protein translocation in the endoplasmic reticulum. In Kluyveromyces lactis (strain ATCC 8585 / CBS 2359 / DSM 70799 / NBRC 1267 / NRRL Y-1140 / WM37) (Yeast), this protein is Protein transport protein Sec61 subunit beta (SBH1).